Here is a 387-residue protein sequence, read N- to C-terminus: Dynactin subunit 2 (387 aa).

3 coiled-coil regions span residues 99–125 (LQRC…DTGR), 256–282 (SQLD…SNAT), and 355–387 (TGVQ…QMIK).

Belongs to the dynactin subunit 2 family. As to quaternary structure, subunit of dynactin, a multiprotein complex associated with dynein.

The protein localises to the cytoplasm. It is found in the cytoskeleton. It localises to the membrane. Modulates cytoplasmic dynein binding to an organelle, and plays a role in prometaphase chromosome alignment and spindle organization during mitosis. The polypeptide is Dynactin subunit 2 (Anopheles gambiae (African malaria mosquito)).